A 202-amino-acid chain; its full sequence is Dephospho-CoA kinase (202 aa).

The DPCK domain occupies 4–201; that stretch reads VIGLTGGIAS…QKYLAMSKQN (198 aa). ATP is bound at residue 12-17; it reads ASGKTT.

It belongs to the CoaE family.

The protein localises to the cytoplasm. It carries out the reaction 3'-dephospho-CoA + ATP = ADP + CoA + H(+). It participates in cofactor biosynthesis; coenzyme A biosynthesis; CoA from (R)-pantothenate: step 5/5. In terms of biological role, catalyzes the phosphorylation of the 3'-hydroxyl group of dephosphocoenzyme A to form coenzyme A. This chain is Dephospho-CoA kinase, found in Vibrio vulnificus (strain CMCP6).